Here is an 899-residue protein sequence, read N- to C-terminus: Protein argonaute (899 aa).

Residues 107-129 form a disordered region; the sequence is TQKPKRRGGRAGGMRGNRGGPST. The segment covering 116-125 has biased composition (gly residues); the sequence is RAGGMRGNRG. A PAZ domain is found at 229 to 313; sequence SMCELLNENR…KQDDYCNSVL (85 aa). The Piwi domain maps to 555 to 878; it reads LVVVVIPGPK…LSKFCGEILG (324 aa).

This sequence belongs to the argonaute family. Ago subfamily. In terms of assembly, interacts with miR2. Highly specific binding to the mRNA m7G-cap. May be a component of the RNA-induced silencing complex (RISC), a sequence-specific, multicomponent nuclease that destroys or silences messenger RNAs homologous to the silencing trigger.

It localises to the cytoplasm. Plays an essential role in growth and, with Dicer, also involved in microRNA (miRNA)-mediated translational repression. The RNA interference pathway is implicated in antigenic variation having a role in regulation of variant-specific surface protein (VSP)-coding gene expression. Several VSP genes are transcribed but only transcripts encoding the VSP to be expressed accumulate. Antisense RNAs corresponding to the silenced VSP genes are detected. The polypeptide is Protein argonaute (Giardia intestinalis (strain ATCC 50581 / GS clone H7) (Giardia lamblia)).